The following is a 345-amino-acid chain: Putative [LysW]-L-2-aminoadipate/[LysW]-L-glutamate phosphate reductase (345 aa).

Residue 11-14 participates in NADP(+) binding; sequence SGFT. The segment at 34 to 56 is disordered; the sequence is TSRSKENKTIGHSHPNLRHSDLR. Residue C146 is part of the active site. N309 is a binding site for NADP(+).

Belongs to the NAGSA dehydrogenase family. Type 1 subfamily. LysY sub-subfamily.

Its subcellular location is the cytoplasm. It catalyses the reaction [amino-group carrier protein]-C-terminal-N-(1-carboxy-5-oxopentan-1-yl)-L-glutamine + phosphate + NADP(+) = [amino-group carrier protein]-C-terminal-N-(1-carboxy-5-phosphooxy-5-oxopentan-1-yl)-L-glutamine + NADPH + H(+). It carries out the reaction [amino-group carrier protein]-C-terminal-gamma-(L-glutamyl-5-semialdehyde)-L-glutamate + phosphate + NADP(+) = [amino-group carrier protein]-C-terminal-gamma-(5-phospho-L-glutamyl)-L-glutamate + NADPH + H(+). It participates in amino-acid biosynthesis; L-lysine biosynthesis via AAA pathway; L-lysine from L-alpha-aminoadipate (Thermus route): step 3/5. The protein operates within amino-acid biosynthesis; L-arginine biosynthesis. Its function is as follows. Involved in both the arginine and lysine biosynthetic pathways. The protein is Putative [LysW]-L-2-aminoadipate/[LysW]-L-glutamate phosphate reductase of Haloarcula marismortui (strain ATCC 43049 / DSM 3752 / JCM 8966 / VKM B-1809) (Halobacterium marismortui).